Consider the following 111-residue polypeptide: Cytochrome c 2.1 (111 aa).

Serine 2 carries the post-translational modification N-acetylserine. The heme c site is built by cysteine 20, cysteine 23, histidine 24, and methionine 85.

The protein belongs to the cytochrome c family. In terms of processing, binds 1 heme c group covalently per subunit.

The protein localises to the mitochondrion intermembrane space. Its function is as follows. Electron carrier protein. The oxidized form of the cytochrome c heme group can accept an electron from the heme group of the cytochrome c1 subunit of cytochrome reductase. Cytochrome c then transfers this electron to the cytochrome oxidase complex, the final protein carrier in the mitochondrial electron-transport chain. This chain is Cytochrome c 2.1 (cyc-2.1), found in Caenorhabditis elegans.